We begin with the raw amino-acid sequence, 349 residues long: Protein-glutamate methylesterase/protein-glutamine glutaminase (349 aa).

The Response regulatory domain occupies Arg-2–Leu-118. Asp-52 carries the 4-aspartylphosphate modification. The CheB-type methylesterase domain occupies Val-159 to Lys-345. Residues Ser-164, His-191, and Asp-287 contribute to the active site.

Belongs to the CheB family. Phosphorylated by CheA. Phosphorylation of the N-terminal regulatory domain activates the methylesterase activity.

The protein localises to the cytoplasm. It carries out the reaction [protein]-L-glutamate 5-O-methyl ester + H2O = L-glutamyl-[protein] + methanol + H(+). The catalysed reaction is L-glutaminyl-[protein] + H2O = L-glutamyl-[protein] + NH4(+). Functionally, involved in chemotaxis. Part of a chemotaxis signal transduction system that modulates chemotaxis in response to various stimuli. Catalyzes the demethylation of specific methylglutamate residues introduced into the chemoreceptors (methyl-accepting chemotaxis proteins or MCP) by CheR. Also mediates the irreversible deamidation of specific glutamine residues to glutamic acid. The protein is Protein-glutamate methylesterase/protein-glutamine glutaminase of Archaeoglobus fulgidus (strain ATCC 49558 / DSM 4304 / JCM 9628 / NBRC 100126 / VC-16).